The chain runs to 301 residues: Ribosomal RNA small subunit methyltransferase H (301 aa).

Residues 33 to 35, aspartate 52, phenylalanine 79, aspartate 100, and glutamine 107 each bind S-adenosyl-L-methionine; that span reads GGH.

Belongs to the methyltransferase superfamily. RsmH family.

The protein resides in the cytoplasm. The enzyme catalyses cytidine(1402) in 16S rRNA + S-adenosyl-L-methionine = N(4)-methylcytidine(1402) in 16S rRNA + S-adenosyl-L-homocysteine + H(+). In terms of biological role, specifically methylates the N4 position of cytidine in position 1402 (C1402) of 16S rRNA. In Mycoplasmopsis synoviae (strain 53) (Mycoplasma synoviae), this protein is Ribosomal RNA small subunit methyltransferase H.